A 397-amino-acid chain; its full sequence is Argininosuccinate synthase (397 aa).

ATP is bound at residue 7–15; it reads LYSGGLDTS. An L-citrulline-binding site is contributed by tyrosine 83. ATP is bound at residue glycine 113. L-aspartate-binding residues include threonine 115, asparagine 119, and aspartate 120. Position 119 (asparagine 119) interacts with L-citrulline. L-citrulline-binding residues include arginine 123, serine 169, serine 178, glutamate 253, and tyrosine 265.

This sequence belongs to the argininosuccinate synthase family. Type 1 subfamily. In terms of assembly, homotetramer.

It localises to the cytoplasm. The enzyme catalyses L-citrulline + L-aspartate + ATP = 2-(N(omega)-L-arginino)succinate + AMP + diphosphate + H(+). It functions in the pathway amino-acid biosynthesis; L-arginine biosynthesis; L-arginine from L-ornithine and carbamoyl phosphate: step 2/3. In Thermoplasma volcanium (strain ATCC 51530 / DSM 4299 / JCM 9571 / NBRC 15438 / GSS1), this protein is Argininosuccinate synthase.